The primary structure comprises 312 residues: Acetyl-coenzyme A carboxylase carboxyl transferase subunit alpha (312 aa).

Positions 36 to 286 (RLDKEVKSIY…KEYFLDALRT (251 aa)) constitute a CoA carboxyltransferase C-terminal domain.

Belongs to the AccA family. Acetyl-CoA carboxylase is a heterohexamer composed of biotin carboxyl carrier protein (AccB), biotin carboxylase (AccC) and two subunits each of ACCase subunit alpha (AccA) and ACCase subunit beta (AccD).

Its subcellular location is the cytoplasm. It catalyses the reaction N(6)-carboxybiotinyl-L-lysyl-[protein] + acetyl-CoA = N(6)-biotinyl-L-lysyl-[protein] + malonyl-CoA. The protein operates within lipid metabolism; malonyl-CoA biosynthesis; malonyl-CoA from acetyl-CoA: step 1/1. Functionally, component of the acetyl coenzyme A carboxylase (ACC) complex. First, biotin carboxylase catalyzes the carboxylation of biotin on its carrier protein (BCCP) and then the CO(2) group is transferred by the carboxyltransferase to acetyl-CoA to form malonyl-CoA. The polypeptide is Acetyl-coenzyme A carboxylase carboxyl transferase subunit alpha (Helicobacter pylori (strain J99 / ATCC 700824) (Campylobacter pylori J99)).